Reading from the N-terminus, the 1171-residue chain is WD repeat-containing protein on Y chromosome (1171 aa).

8 WD repeats span residues 157–201, 331–370, 374–413, 464–503, 516–555, 603–643, 748–787, and 831–870; these read EIPE…LRSA, RIPL…EPSA, GHNG…LLQT, THAA…RKII, IIDI…VVRN, FHTD…RRYN, KVGD…IPQA, and GHLK…LGTL. The interval 1076-1171 is disordered; it reads RTSFTLSDYT…TNTMKSSNSH (96 aa). 2 stretches are compositionally biased toward polar residues: residues 1094 to 1106 and 1161 to 1171; these read SSRN…SSGS and KTNTMKSSNSH.

In Drosophila grimshawi (Hawaiian fruit fly), this protein is WD repeat-containing protein on Y chromosome.